The sequence spans 599 residues: Bile salt-activated lipase (599 aa).

Positions 1–20 are cleaved as a signal peptide; that stretch reads MGRLEVLFLGLTCCLAAACA. A disulfide bond links Cys84 and Cys100. Residue Asn207 is glycosylated (N-linked (GlcNAc...) asparagine). The active-site Acyl-ester intermediate is Ser214. Cys266 and Cys277 are disulfide-bonded. N-linked (GlcNAc...) asparagine glycosylation occurs at Asn325. Active-site charge relay system residues include Asp340 and His455. Positions 553-599 are disordered; sequence TGDQDTLTPPEDDSEVAPDPPSDDSQVVPVPPTDDSVEAQMPATIGF. Tandem repeats lie at residues 559–569, 570–580, and 581–588. The segment at 559–588 is 4 X 11 AA tandem repeats, O-glycosylated region; sequence LTPPEDDSEVAPDPPSDDSQVVPVPPTDDS.

The protein belongs to the type-B carboxylesterase/lipase family. Interacts with CLC. As to expression, EXpressed by eosinophils.

The protein resides in the secreted. The catalysed reaction is a triacylglycerol + H2O = a diacylglycerol + a fatty acid + H(+). The enzyme catalyses 1,2,3-tri-(9Z-octadecenoyl)-glycerol + H2O = di-(9Z)-octadecenoylglycerol + (9Z)-octadecenoate + H(+). It carries out the reaction 1,2,3-trioctanoylglycerol + H2O = dioctanoylglycerol + octanoate + H(+). It catalyses the reaction a sterol ester + H2O = a sterol + a fatty acid + H(+). The catalysed reaction is an acetyl ester + H2O = an aliphatic alcohol + acetate + H(+). The enzyme catalyses a butanoate ester + H2O = an aliphatic alcohol + butanoate + H(+). It carries out the reaction 9-hexadecanoyloxy-octadecanoate + H2O = 9-hydroxy-octadecanoate + hexadecanoate + H(+). It catalyses the reaction 9-(9Z-octadecenoyloxy)-octadecanoate + H2O = 9-hydroxy-octadecanoate + (9Z)-octadecenoate + H(+). The catalysed reaction is cholesteryl (9Z-octadecenoate) + H2O = cholesterol + (9Z)-octadecenoate + H(+). The enzyme catalyses 1-hexadecanoyl-sn-glycero-3-phosphocholine + H2O = sn-glycerol 3-phosphocholine + hexadecanoate + H(+). It carries out the reaction 12-hexadecanoyloxy-octadecanoate + H2O = 12-hydroxyoctadecanoate + hexadecanoate + H(+). It catalyses the reaction 12-(9Z-octadecenoyloxy)-octadecanoate + H2O = 12-hydroxyoctadecanoate + (9Z)-octadecenoate + H(+). The catalysed reaction is 13-(9Z-octadecenoyloxy)-octadecanoate + H2O = 13-hydroxy-octadecanoate + (9Z)-octadecenoate + H(+). The enzyme catalyses 9-(9Z-hexadecenoyloxy)-octadecanoate + H2O = (9Z)-hexadecenoate + 9-hydroxy-octadecanoate + H(+). It carries out the reaction 12-(9Z-hexadecenoyloxy)-octadecanoate + H2O = 12-hydroxyoctadecanoate + (9Z)-hexadecenoate + H(+). It catalyses the reaction 13-(9Z-hexadecenoyloxy)-octadecanoate + H2O = 13-hydroxy-octadecanoate + (9Z)-hexadecenoate + H(+). The catalysed reaction is 12-octadecanoyloxy-octadecanoate + H2O = 12-hydroxyoctadecanoate + octadecanoate + H(+). The enzyme catalyses 13-octadecanoyloxy-octadecanoate + H2O = 13-hydroxy-octadecanoate + octadecanoate + H(+). It carries out the reaction 5-(9Z-hexadecenoyloxy)-octadecanoate + H2O = 5-hydroxy-octadecanoate + (9Z)-hexadecenoate + H(+). It catalyses the reaction 9-octadecanoyloxy-octadecanoate + H2O = 9-hydroxy-octadecanoate + octadecanoate + H(+). Its activity is regulated as follows. Activated by bile salts such as sodium taurocholate. In terms of biological role, catalyzes the hydrolysis of a wide range of substrates including cholesteryl esters, phospholipids, lysophospholipids, di- and tri-acylglycerols, and fatty acid esters of hydroxy fatty acids (FAHFAs). Preferentially hydrolyzes FAHFAs with the ester bond further away from the carboxylate. Unsaturated FAHFAs are hydrolyzed more quickly than saturated FAHFAs. Has an essential role in the complete digestion of dietary lipids and their intestinal absorption, along with the absorption of fat-soluble vitamins. The sequence is that of Bile salt-activated lipase (Cel) from Mus musculus (Mouse).